The primary structure comprises 396 residues: L-lactate dehydrogenase (396 aa).

Residues 1-380 form the FMN hydroxy acid dehydrogenase domain; it reads MIISAASDYR…TQDSLVQGLG (380 aa). Substrate is bound at residue tyrosine 24. 2 residues coordinate FMN: serine 106 and glutamine 127. Tyrosine 129 serves as a coordination point for substrate. Residue threonine 155 participates in FMN binding. Residue arginine 164 participates in substrate binding. Residue lysine 251 participates in FMN binding. The active-site Proton acceptor is the histidine 275. Arginine 278 contacts substrate. 306-330 serves as a coordination point for FMN; sequence DSGIRNGLDVVRMIALGADTVLLGR.

It belongs to the FMN-dependent alpha-hydroxy acid dehydrogenase family. FMN serves as cofactor.

Its subcellular location is the cell inner membrane. It catalyses the reaction (S)-lactate + A = pyruvate + AH2. Its function is as follows. Catalyzes the conversion of L-lactate to pyruvate. Is coupled to the respiratory chain. The chain is L-lactate dehydrogenase from Escherichia coli O127:H6 (strain E2348/69 / EPEC).